Here is a 222-residue protein sequence, read N- to C-terminus: ER membrane protein complex subunit 7 homolog (222 aa).

The signal sequence occupies residues 1-16 (MKSILLLFSLIVLGSA). Over 17–145 (TEEVSRTEQT…RKREEWRITD (129 aa)) the chain is Extracellular. A helical transmembrane segment spans residues 146–166 (MLFSPMVLMLVVPLVVMLILP). Over 167-222 (KMTANDPELKKEMENMQMPKVDMPDVGEMMANFFGGSAPAKKKAVTGGSGSGQRRK) the chain is Cytoplasmic.

The protein belongs to the EMC7 family.

The protein resides in the membrane. This chain is ER membrane protein complex subunit 7 homolog, found in Caenorhabditis elegans.